The following is a 765-amino-acid chain: E3 ubiquitin-protein ligase SlrP (765 aa).

The interaction with target proteins stretch occupies residues 1 to 453 (MFNITNIQST…YQGPRVLFAM (453 aa)). 10 LRR repeats span residues 200–219 (QITT…ENLQ), 221–242 (NIKT…LPDT), 243–262 (IQEM…RLPS), 263–284 (ALQS…LPEE), 285–305 (LRYL…LPSE), 306–325 (ITHL…TLPP), 326–346 (GLKT…SLPP), 347–368 (ELQV…LPPT), 369–389 (ITTL…LPAA), and 390–410 (LQIM…LPHF). A linker region spans residues 454-461 (GDFSIVRV). Residues 462–765 (TRPLHQAVQG…VSSLMSAYWR (304 aa)) are E3 ubiquitin-protein ligase catalytic domain. The NEL domain maps to 464 to 758 (PLHQAVQGWL…NILLKKEVSS (295 aa)). The active-site Glycyl thioester intermediate is Cys546.

The protein belongs to the LRR-containing bacterial E3 ligase family. As to quaternary structure, interacts with host TXN. In terms of processing, ubiquitinated in the presence of host E1 ubiquitin-activating enzyme, E2 ubiquitin-conjugating enzyme and ubiquitin.

It localises to the secreted. Its subcellular location is the host cytoplasm. It carries out the reaction S-ubiquitinyl-[E2 ubiquitin-conjugating enzyme]-L-cysteine + [acceptor protein]-L-lysine = [E2 ubiquitin-conjugating enzyme]-L-cysteine + N(6)-ubiquitinyl-[acceptor protein]-L-lysine.. Effector proteins function to alter host cell physiology and promote bacterial survival in host tissues. This protein is an E3 ubiquitin ligase that interferes with host's ubiquitination pathway. Can ubiquitinate both ubiquitin and host TXN (thioredoxin). Leads to significant decrease of thioredoxin activity and increase of host cell death. This chain is E3 ubiquitin-protein ligase SlrP (slrP), found in Salmonella typhimurium (strain 14028s / SGSC 2262).